We begin with the raw amino-acid sequence, 354 residues long: MKFLDQCKIYVRSGNGGGGAVSFRREKYIEYGGPDGGDGGRGGDVWIEAVEGLNTLIDYRYQQHFKAGTGVHGMGRGRHGAAGDDVLLKVPVGTQVLEEDKETLIADLDTAGMTLRLAKGGNGGWGNLHFKGPVNQAPKYANPGQDGEELWVWLRLKLIADVGLVGLPNAGKSTFLAAATAARPKIADYPFTTLTPNLGVVDLSTSERFVLADIPGLIEGASEGAGLGTRFLGHVERSAVLIHLVDATQDDIAGAWTTIRGELEAYGDELADKSEILALNKVDALDPETRKAKAAELQAVSGIKPMLVSGVSGEGVTELLRAAFTQVRIRRGETPAEAAIDEAPEEETPGGWQP.

Residues 1–159 (MKFLDQCKIY…LWVWLRLKLI (159 aa)) form the Obg domain. The OBG-type G domain occupies 160-328 (ADVGLVGLPN…LLRAAFTQVR (169 aa)). GTP-binding positions include 166-173 (GLPNAGKS), 191-195 (FTTLT), 213-216 (DIPG), 280-283 (NKVD), and 309-311 (SGV). Positions 173 and 193 each coordinate Mg(2+). Positions 333–354 (ETPAEAAIDEAPEEETPGGWQP) are disordered. A compositionally biased stretch (acidic residues) spans 339 to 348 (AIDEAPEEET).

It belongs to the TRAFAC class OBG-HflX-like GTPase superfamily. OBG GTPase family. Monomer. Mg(2+) serves as cofactor.

It localises to the cytoplasm. Functionally, an essential GTPase which binds GTP, GDP and possibly (p)ppGpp with moderate affinity, with high nucleotide exchange rates and a fairly low GTP hydrolysis rate. Plays a role in control of the cell cycle, stress response, ribosome biogenesis and in those bacteria that undergo differentiation, in morphogenesis control. The sequence is that of GTPase Obg from Caulobacter sp. (strain K31).